A 327-amino-acid polypeptide reads, in one-letter code: Vacuolar protein sorting-associated protein 26A (327 aa).

The disordered stretch occupies residues 305 to 327 (RNFHQRYESPEPRPSLSAEQPEM).

Belongs to the VPS26 family. In terms of assembly, component of the heterotrimeric retromer cargo-selective complex (CSC) which is believed to associate with variable sorting nexins to form functionally distinct retromer complex variants.

It is found in the cytoplasm. It localises to the endosome membrane. The protein resides in the early endosome. In terms of biological role, acts as a component of the retromer cargo-selective complex (CSC). The CSC is believed to be the core functional component of retromer or respective retromer complex variants acting to prevent missorting of selected transmembrane cargo proteins into the lysosomal degradation pathway. Retromer mediates retrograde transport of cargo proteins from endosomes to the trans-Golgi network (TGN). The chain is Vacuolar protein sorting-associated protein 26A (vps26a) from Danio rerio (Zebrafish).